A 483-amino-acid polypeptide reads, in one-letter code: FAD-linked oxidoreductase easE (483 aa).

In terms of domain architecture, FAD-binding PCMH-type spans 10–193 (QGRLPFYSAV…TEATVRVFSD (184 aa)).

This sequence belongs to the oxygen-dependent FAD-linked oxidoreductase family. The cofactor is FAD.

The protein operates within alkaloid biosynthesis; ergot alkaloid biosynthesis. In terms of biological role, FAD-linked oxidoreductase; part of the gene cluster that mediates the biosynthesis of fungal ergot alkaloid. DmaW catalyzes the first step of ergot alkaloid biosynthesis by condensing dimethylallyl diphosphate (DMAP) and tryptophan to form 4-dimethylallyl-L-tryptophan. The second step is catalyzed by the methyltransferase easF that methylates 4-dimethylallyl-L-tryptophan in the presence of S-adenosyl-L-methionine, resulting in the formation of 4-dimethylallyl-L-abrine. The catalase easC and the FAD-dependent oxidoreductase easE then transform 4-dimethylallyl-L-abrine to chanoclavine-I which is further oxidized by easD in the presence of NAD(+), resulting in the formation of chanoclavine-I aldehyde. Agroclavine dehydrogenase easG then mediates the conversion of chanoclavine-I aldehyde to agroclavine via a non-enzymatic adduct reaction: the substrate is an iminium intermediate that is formed spontaneously from chanoclavine-I aldehyde in the presence of glutathione. The presence of easA is not required to complete this reaction. Further conversion of agroclavine to paspalic acid is a two-step process involving oxidation of agroclavine to elymoclavine and of elymoclavine to paspalic acid, the second step being performed by the elymoclavine oxidase cloA. Paspalic acid is then further converted to D-lysergic acid. Ergopeptines are assembled from D-lysergic acid and three different amino acids by the D-lysergyl-peptide-synthetases composed each of a monomudular and a trimodular nonribosomal peptide synthetase subunit. LpsB and lpsC encode the monomodular subunits responsible for D-lysergic acid activation and incorporation into the ergopeptine backbone. LpsA1 and A2 subunits encode the trimodular nonribosomal peptide synthetase assembling the tripeptide portion of ergopeptines. LpsA1 is responsible for formation of the major ergopeptine, ergotamine, and lpsA2 for alpha-ergocryptine, the minor ergopeptine of the total alkaloid mixture elaborated by C.purpurea. D-lysergyl-tripeptides are assembled by the nonribosomal peptide synthetases and released as N-(D-lysergyl-aminoacyl)-lactams. Cyclolization of the D-lysergyl-tripeptides is performed by the Fe(2+)/2-ketoglutarate-dependent dioxygenase easH which introduces a hydroxyl group into N-(D-lysergyl-aminoacyl)-lactam at alpha-C of the aminoacyl residue followed by spontaneous condensation with the terminal lactam carbonyl group. The chain is FAD-linked oxidoreductase easE from Claviceps purpurea (strain 20.1) (Ergot fungus).